A 555-amino-acid polypeptide reads, in one-letter code: Hydrogenase-4 component G (555 aa).

It belongs to the complex I 49 kDa subunit family. Requires [4Fe-4S] cluster as cofactor.

Functionally, possible component of hydrogenase 4. The chain is Hydrogenase-4 component G from Escherichia coli (strain K12).